The following is a 369-amino-acid chain: Coiled-coil domain-containing protein 130 homolog (369 aa).

Basic and acidic residues predominate over residues 233–263; the sequence is TRYRDTKTHDDHLESSRDRIESRRIFRRPEE. Residues 233 to 369 are disordered; it reads TRYRDTKTHD…EYGNSSDDSD (137 aa). Residues 266 to 282 are compositionally biased toward low complexity; sequence TPSTSSGSSGGAVPSAS. Positions 283–297 are enriched in basic and acidic residues; sequence ERLKATMKAERDKRI. Residues 299-310 show a composition bias toward low complexity; it reads ASFSTAGTSSAT.

This sequence belongs to the CWC16 family.

This is Coiled-coil domain-containing protein 130 homolog from Caenorhabditis elegans.